We begin with the raw amino-acid sequence, 550 residues long: Glucose-6-phosphate isomerase (550 aa).

Glutamate 355 (proton donor) is an active-site residue. Catalysis depends on residues histidine 386 and lysine 512.

This sequence belongs to the GPI family.

It localises to the cytoplasm. The catalysed reaction is alpha-D-glucose 6-phosphate = beta-D-fructose 6-phosphate. The protein operates within carbohydrate biosynthesis; gluconeogenesis. Its pathway is carbohydrate degradation; glycolysis; D-glyceraldehyde 3-phosphate and glycerone phosphate from D-glucose: step 2/4. Catalyzes the reversible isomerization of glucose-6-phosphate to fructose-6-phosphate. This is Glucose-6-phosphate isomerase from Rhodococcus opacus (strain B4).